An 88-amino-acid polypeptide reads, in one-letter code: Small ribosomal subunit protein bS20 (88 aa).

Residues 1–33 (MANTSSAKKATRKIARRTAVNKSRRTQMRGSVR) form a disordered region.

It belongs to the bacterial ribosomal protein bS20 family.

Its function is as follows. Binds directly to 16S ribosomal RNA. In Rhodopseudomonas palustris (strain BisB5), this protein is Small ribosomal subunit protein bS20.